The chain runs to 397 residues: ATP-dependent RNA helicase RhlB (397 aa).

Positions 8 to 36 (TRFHDFNLAPELMHAIQDLGFPYCTPIQA) match the Q motif motif. The Helicase ATP-binding domain maps to 39-219 (LGFTLKGKDA…KQWTTDPSIV (181 aa)). 52–59 (AQTGTGKT) is a binding site for ATP. Positions 165 to 168 (DEAD) match the DEAD box motif. Residues 242–392 (DKYKLLYNLV…TPPTHLLRAV (151 aa)) enclose the Helicase C-terminal domain.

The protein belongs to the DEAD box helicase family. RhlB subfamily. As to quaternary structure, component of the RNA degradosome, which is a multiprotein complex involved in RNA processing and mRNA degradation.

The protein resides in the cytoplasm. The catalysed reaction is ATP + H2O = ADP + phosphate + H(+). Its function is as follows. DEAD-box RNA helicase involved in RNA degradation. Has RNA-dependent ATPase activity and unwinds double-stranded RNA. The polypeptide is ATP-dependent RNA helicase RhlB (Pseudomonas syringae pv. tomato (strain ATCC BAA-871 / DC3000)).